The following is a 1133-amino-acid chain: Early transcription factor large subunit homolog (1133 aa).

Residues 52–352 (KGGRAFFPCD…PNGQPLQRQQ (301 aa)) form the Helicase ATP-binding domain. 99-106 (WQTGTGKS) lines the ATP pocket. The DEAH box motif lies at 281–284 (DEIH). The 201-residue stretch at 524–724 (MMKDILSIIR…EGDKALRKHA (201 aa)) folds into the Helicase C-terminal domain.

Belongs to the DEAD box helicase family. DEAH subfamily.

It is found in the virion. It catalyses the reaction ATP + H2O = ADP + phosphate + H(+). Functionally, putative initation factor. The polypeptide is Early transcription factor large subunit homolog (Ornithodoros (relapsing fever ticks)).